Consider the following 216-residue polypeptide: Protein Syd (216 aa).

Belongs to the Syd family.

It localises to the cell inner membrane. Functionally, interacts with the SecY protein in vivo. May bind preferentially to an uncomplexed state of SecY, thus functioning either as a chelating agent for excess SecY in the cell or as a regulatory factor that negatively controls the translocase function. In Shewanella frigidimarina (strain NCIMB 400), this protein is Protein Syd.